The chain runs to 156 residues: Ribosome maturation factor RimP (156 aa).

This sequence belongs to the RimP family.

It is found in the cytoplasm. In terms of biological role, required for maturation of 30S ribosomal subunits. This Dictyoglomus thermophilum (strain ATCC 35947 / DSM 3960 / H-6-12) protein is Ribosome maturation factor RimP.